The following is a 620-amino-acid chain: Long-chain fatty acid transport protein 2 (620 aa).

Residues 1–4 lie on the Lumenal side of the membrane; it reads MLPV. The chain crosses the membrane as a helical span at residues 5 to 27; the sequence is LYTGLAGLLLLPLLLTCCCPYLL. The Cytoplasmic portion of the chain corresponds to 28-106; sequence QDVRFFLQLA…DHLGLRQGDC (79 aa). Residues 107–127 form a helical membrane-spanning segment; it reads VALFMGNEPAYVWLWLGLLKL. Over 128–267 the chain is Lumenal; that stretch reads GCPMACLNYN…DVIYTTMPLY (140 aa). Position 222–233 (222–233) interacts with AMP; that stretch reads YIYTSGTTGLPK. The chain crosses the membrane as a helical span at residues 268–288; that stretch reads HSAALMIGLHGCIVVGATFAL. The Cytoplasmic portion of the chain corresponds to 289 to 620; that stretch reads RSKFSASQFW…NAIIDKTLKL (332 aa). An N6-acetyllysine modification is found at K291. The residue at position 577 (T577) is a Phosphothreonine.

This sequence belongs to the ATP-dependent AMP-binding enzyme family. Liver and kidney (at protein level).

The protein localises to the endoplasmic reticulum membrane. The protein resides in the peroxisome membrane. Its subcellular location is the cell membrane. It is found in the microsome. It catalyses the reaction a fatty acid(in) = a fatty acid(out). It carries out the reaction (9Z)-octadecenoate(out) = (9Z)-octadecenoate(in). The catalysed reaction is a long-chain fatty acid + ATP + CoA = a long-chain fatty acyl-CoA + AMP + diphosphate. The enzyme catalyses (5Z,8Z,11Z,14Z)-eicosatetraenoate + ATP + CoA = (5Z,8Z,11Z,14Z)-eicosatetraenoyl-CoA + AMP + diphosphate. It catalyses the reaction (9Z,12Z,15Z)-octadecatrienoate + ATP + CoA = (9Z,12Z,15Z)-octadecatrienoyl-CoA + AMP + diphosphate. It carries out the reaction hexadecanoate + ATP + CoA = hexadecanoyl-CoA + AMP + diphosphate. The catalysed reaction is (9Z)-octadecenoate + ATP + CoA = (9Z)-octadecenoyl-CoA + AMP + diphosphate. The enzyme catalyses 2,6,10,14-tetramethylpentadecanoate + ATP + CoA = pristanoyl-CoA + AMP + diphosphate. It catalyses the reaction (E)-hexadec-2-enoate + ATP + CoA = (2E)-hexadecenoyl-CoA + AMP + diphosphate. It carries out the reaction 3,7,11,15-tetramethylhexadecanoate + ATP + CoA = phytanoyl-CoA + AMP + diphosphate. The catalysed reaction is a very long-chain fatty acid + ATP + CoA = a very long-chain fatty acyl-CoA + AMP + diphosphate. The enzyme catalyses tetracosanoate + ATP + CoA = tetracosanoyl-CoA + AMP + diphosphate. It catalyses the reaction (4Z,7Z,10Z,13Z,16Z,19Z)-docosahexaenoate + ATP + CoA = (4Z,7Z,10Z,13Z,16Z,19Z)-docosahexaenoyl-CoA + AMP + diphosphate. It carries out the reaction (25R)-3alpha,7alpha,12alpha-trihydroxy-5beta-cholestan-26-oate + ATP + CoA = (25R)-3alpha,7alpha,12alpha-trihydroxy-5beta-cholestan-26-oyl-CoA + AMP + diphosphate. Its function is as follows. Mediates the import of long-chain fatty acids (LCFA) into the cell by facilitating their transport across cell membranes, playing an important role in hepatic fatty acid uptake. Also functions as an acyl-CoA ligase catalyzing the ATP-dependent formation of fatty acyl-CoA using LCFA and very-long-chain fatty acids (VLCFA) as substrates, which prevents fatty acid efflux from cells and might drive more fatty acid uptake. Plays a pivotal role in regulating available LCFA substrates from exogenous sources in tissues undergoing high levels of beta-oxidation or triglyceride synthesis. Can also activate branched-chain fatty acids such as phytanic acid and pristanic acid. May contribute to the synthesis of sphingosine-1-phosphate. Does not activate C24 bile acids, cholate and chenodeoxycholate. In vitro, activates 3-alpha,7-alpha,12-alpha-trihydroxy-5-beta-cholestanate (THCA), the C27 precursor of cholic acid deriving from the de novo synthesis from cholesterol. However, it is not critical for THCA activation and bile synthesis in vivo. The polypeptide is Long-chain fatty acid transport protein 2 (Slc27a2) (Rattus norvegicus (Rat)).